A 684-amino-acid polypeptide reads, in one-letter code: Methionine--tRNA ligase (684 aa).

The 'HIGH' region motif lies at 12 to 22 (PYANGSIHLGH). Zn(2+)-binding residues include Cys-143, Cys-146, Cys-156, and Cys-159. Positions 339–343 (KMSKS) match the 'KMSKS' region motif. Residue Lys-342 participates in ATP binding. The tRNA-binding domain maps to 581 to 684 (DFMKIDMRVA…AGAQPGDKVG (104 aa)).

It belongs to the class-I aminoacyl-tRNA synthetase family. MetG type 1 subfamily. In terms of assembly, homodimer. Zn(2+) is required as a cofactor.

The protein localises to the cytoplasm. It catalyses the reaction tRNA(Met) + L-methionine + ATP = L-methionyl-tRNA(Met) + AMP + diphosphate. Is required not only for elongation of protein synthesis but also for the initiation of all mRNA translation through initiator tRNA(fMet) aminoacylation. This chain is Methionine--tRNA ligase, found in Neisseria gonorrhoeae (strain ATCC 700825 / FA 1090).